The sequence spans 623 residues: Membrane protein insertase YidC (623 aa).

The chain crosses the membrane as a helical span at residues 8-28 (LILATGLSFLVIMVWFFLFPP). The segment at 33–64 (TEGEPTVATQQTAVAPSATPDAPTTAVPPDAD) is disordered. Residues 44 to 62 (TAVAPSATPDAPTTAVPPD) are compositionally biased toward low complexity. 4 helical membrane passes run 379-399 (MGLA…PLAY), 449-469 (LPIL…FVTI), 507-527 (TTMA…SMWL), and 543-563 (IFAW…SGLV). Positions 601–617 (KPAAQPAGKAANDGAAP) are enriched in low complexity. The interval 601–623 (KPAAQPAGKAANDGAAPAKKRKP) is disordered.

It belongs to the OXA1/ALB3/YidC family. Type 1 subfamily. In terms of assembly, interacts with the Sec translocase complex via SecD. Specifically interacts with transmembrane segments of nascent integral membrane proteins during membrane integration.

The protein resides in the cell inner membrane. Functionally, required for the insertion and/or proper folding and/or complex formation of integral membrane proteins into the membrane. Involved in integration of membrane proteins that insert both dependently and independently of the Sec translocase complex, as well as at least some lipoproteins. Aids folding of multispanning membrane proteins. This is Membrane protein insertase YidC from Cereibacter sphaeroides (strain KD131 / KCTC 12085) (Rhodobacter sphaeroides).